The primary structure comprises 412 residues: Adherens junction-associated protein 1 (412 aa).

A signal peptide spans 1 to 43 (MWIQQLLGLSSMSIRWPGRSLGSHAWILIAMLQLAVDFPSCDS). The Extracellular portion of the chain corresponds to 44 to 284 (LGPGPEFRLL…GETSGLAVHQ (241 aa)). Disordered stretches follow at residues 62–175 (LWSL…GRPT) and 243–271 (DPWK…IQPP). Low complexity predominate over residues 121-146 (PPAATRSSPSLASATASSSIVTAGAA). Basic and acidic residues predominate over residues 160–171 (HDTEFNDFDFRG). Positions 248 to 263 (TPVGVSTTEPSTSPSS) are enriched in low complexity. Residues 285 to 305 (IITITVSLIMVIAALITTLVL) traverse the membrane as a helical segment. A targeting signals region spans residues 305 to 412 (LKNCCAPSGH…VSEKWFEISC (108 aa)). Topologically, residues 306–412 (KNCCAPSGHT…VSEKWFEISC (107 aa)) are cytoplasmic.

Forms a complex with CDH1 and CTNNB1; interacts directly with CTNNB1. Interacts with AP1M2 and isoform 2 of BSG/CD147.

It is found in the basolateral cell membrane. The protein localises to the apical cell membrane. The protein resides in the cell junction. Its subcellular location is the adherens junction. Its function is as follows. Plays a role in cell adhesion and cell migration. This Mus musculus (Mouse) protein is Adherens junction-associated protein 1 (Ajap1).